A 156-amino-acid polypeptide reads, in one-letter code: MQFTLSAVVLALAGFSAALPAESMNNGLQHQNGTPRFPVPDSLTIEQAQAKCGDQAQLSCCNKATYAGDTTDINSGILGGTLSNLIGAGSGASGLGLFDQCSKLGAQIPIVIGIPIQDILNQQCKQNIACCANSPSTASGNLVGAALPCVALGSIL.

The signal sequence occupies residues 1 to 18 (MQFTLSAVVLALAGFSAA). Cystine bridges form between C52/C130, C60/C124, C61/C101, and C131/C149.

The protein belongs to the fungal hydrophobin family.

It is found in the secreted. The protein resides in the cell wall. Functionally, aerial growth, conidiation, and dispersal of filamentous fungi in the environment rely upon a capability of their secreting small amphipathic proteins called hydrophobins (HPBs) with low sequence identity. Class I can self-assemble into an outermost layer of rodlet bundles on aerial cell surfaces, conferring cellular hydrophobicity that supports fungal growth, development and dispersal; whereas Class II form highly ordered films at water-air interfaces through intermolecular interactions but contribute nothing to the rodlet structure. In P.expansum, hydrophobins contribute to germination, tolerance to cold stress and mycotoxins patulin and citrinin production. HfbA and HfbB are essential for fungal surface hydrophobicity. The chain is Class I hydrophobin B from Penicillium expansum (Blue mold rot fungus).